Here is a 477-residue protein sequence, read N- to C-terminus: TNF receptor-associated factor family protein DDB_G0278133 (477 aa).

The RING-type; degenerate zinc-finger motif lies at 45 to 88 (CDICTLELFIESEPKALQCKEGHLACRRCWERYLSTNKQCMTCK). 2 TRAF-type zinc fingers span residues 160–211 (NHYK…SSLS) and 212–267 (DHHK…SKMQ). Residues 271 to 326 (LEHSVTKLMNQNEIIKKDNQNLDQEKKIEEIKLKLNNLLNNYIQLKNEIAVLKQNS) are a coiled coil. The MATH domain occupies 331-463 (VYSNKWIIPE…FLNEKGELEI (133 aa)).

It belongs to the TNF receptor-associated factor family. A subfamily.

The protein resides in the cytoplasm. In terms of biological role, probable adapter protein and signal transducer that links members of the tumor necrosis factor receptor family to different signaling pathways by association with the receptor cytoplasmic domain and kinases. This is TNF receptor-associated factor family protein DDB_G0278133 from Dictyostelium discoideum (Social amoeba).